The primary structure comprises 345 residues: tRNA-dihydrouridine(20/20a) synthase (345 aa).

Residues P32 to L34 and Q84 contribute to the FMN site. The Proton donor role is filled by C114. Residues K153, H186, N226–G228, and G248–R249 each bind FMN.

It belongs to the Dus family. DusA subfamily. It depends on FMN as a cofactor.

It carries out the reaction 5,6-dihydrouridine(20) in tRNA + NADP(+) = uridine(20) in tRNA + NADPH + H(+). The catalysed reaction is 5,6-dihydrouridine(20) in tRNA + NAD(+) = uridine(20) in tRNA + NADH + H(+). It catalyses the reaction 5,6-dihydrouridine(20a) in tRNA + NADP(+) = uridine(20a) in tRNA + NADPH + H(+). The enzyme catalyses 5,6-dihydrouridine(20a) in tRNA + NAD(+) = uridine(20a) in tRNA + NADH + H(+). Functionally, catalyzes the synthesis of 5,6-dihydrouridine (D), a modified base found in the D-loop of most tRNAs, via the reduction of the C5-C6 double bond in target uridines. Specifically modifies U20 and U20a in tRNAs. The protein is tRNA-dihydrouridine(20/20a) synthase of Escherichia coli O157:H7.